Here is a 569-residue protein sequence, read N- to C-terminus: Melanophilin (569 aa).

The region spanning 4 to 124 (KLDLSKLTDD…MGSLEWYYGH (121 aa)) is the RabBD domain. The segment at 58–112 (HLNETHCARCLQPYRLLVAPKRQCLDCHLFTCQDCSHAHPEEEGWLCDPCHLARV) adopts an FYVE-type zinc-finger fold. Positions 143–430 (GRLQGGGGPE…MQPGRTTDQE (288 aa)) are disordered. Basic and acidic residues-rich tracts occupy residues 352–362 (ETLKRKLEEMT) and 379–390 (EEEAGLNRKTSI). Polar residues predominate over residues 404–415 (SGQTSRQETSPR). Positions 431-465 (LLELEDRVAVTASEVQQVESEVSNIKSKIAALQAA) form a coiled coil. Residues 490–569 (GRLGQTPKDP…FAKPVMTQRP (80 aa)) form a disordered region. Residues 526-535 (SQDKAGDSFD) are compositionally biased toward basic and acidic residues.

Binds RAB27A that has been activated by GTP-binding via its N-terminus. Binds MYO5A via its C-terminal coiled coil domain.

Its subcellular location is the melanosome. In terms of biological role, rab effector protein involved in melanosome transport. Serves as link between melanosome-bound RAB27A and the motor protein MYO5A. In Felis catus (Cat), this protein is Melanophilin (MLPH).